The sequence spans 269 residues: 3-methyl-2-oxobutanoate hydroxymethyltransferase (269 aa).

Positions 52 and 91 each coordinate Mg(2+). 3-methyl-2-oxobutanoate-binding positions include 52-53 (DT), Asp91, and Lys121. Glu123 contacts Mg(2+). Glu186 serves as the catalytic Proton acceptor.

Belongs to the PanB family. Homodecamer; pentamer of dimers. The cofactor is Mg(2+).

It is found in the cytoplasm. The catalysed reaction is 3-methyl-2-oxobutanoate + (6R)-5,10-methylene-5,6,7,8-tetrahydrofolate + H2O = 2-dehydropantoate + (6S)-5,6,7,8-tetrahydrofolate. It functions in the pathway cofactor biosynthesis; (R)-pantothenate biosynthesis; (R)-pantoate from 3-methyl-2-oxobutanoate: step 1/2. Catalyzes the reversible reaction in which hydroxymethyl group from 5,10-methylenetetrahydrofolate is transferred onto alpha-ketoisovalerate to form ketopantoate. The polypeptide is 3-methyl-2-oxobutanoate hydroxymethyltransferase (Rhodopirellula baltica (strain DSM 10527 / NCIMB 13988 / SH1)).